Here is a 334-residue protein sequence, read N- to C-terminus: Mediator of RNA polymerase II transcription subunit 4 (334 aa).

Residues 71-100 adopt a coiled-coil conformation; that stretch reads QEREQLIRTLEAHVEKRDEVIQQLETNLKS. Residues 193-334 form a disordered region; the sequence is PLITSPSASS…ASKKTGSSNK (142 aa). Polar residues-rich tracts occupy residues 194–206 and 251–282; these read LITSPSASSSNGG and NEKQWQNPGVSGATSTQSPYNRVSQSPSSSPN.

Belongs to the Mediator complex subunit 4 family. In terms of assembly, component of the Mediator complex.

It localises to the nucleus. Its function is as follows. Component of the Mediator complex, a coactivator involved in the regulated transcription of nearly all RNA polymerase II-dependent genes. Mediator functions as a bridge to convey information from gene-specific regulatory proteins to the basal RNA polymerase II transcription machinery. Mediator is recruited to promoters by direct interactions with regulatory proteins and serves as a scaffold for the assembly of a functional preinitiation complex with RNA polymerase II and the general transcription factors. This is Mediator of RNA polymerase II transcription subunit 4 (mdt-4) from Caenorhabditis elegans.